Reading from the N-terminus, the 765-residue chain is Transcription factor SKN7 (765 aa).

The disordered stretch occupies residues 1–42 (MPPTNGEGGSQQPQQQQQQQQQQQQQQQQQQQQQQGGSGSSD). Over residues 11 to 35 (QQPQQQQQQQQQQQQQQQQQQQQQQ) the composition is skewed to low complexity. Positions 40–145 (SSDFVRKLYK…NLDNIRRKAP (106 aa)) are DNA-binding domain. Residues 157–198 (FNASQQQIAALSESLQATQQQLQALQQQCYELEKTNRLLVSE) are a coiled coil. The hydrophobic repeat HR-A/B stretch occupies residues 160–220 (SQQQIAALSE…QASNEIINHL (61 aa)). The segment at 371–391 (SSSQITPSQITPPPKDQMSSM) is disordered. The Response regulatory domain maps to 398–514 (RVLLVEDDKT…NMSRLLRRHL (117 aa)). At Asp-449 the chain carries 4-aspartylphosphate. The transactivation domain stretch occupies residues 542-765 (TAGPATTGVG…PGVGVAGFVQ (224 aa)). The segment covering 550-564 (VGVGVAGAPSGGAHG) has biased composition (gly residues). 2 disordered regions span residues 550 to 647 (VGVG…PAGL) and 686 to 765 (PGAM…GFVQ). Residues 569 to 584 (AQHQQGYAMAPPTTMQ) show a composition bias toward low complexity. The span at 626-636 (QPPPPPTPTQP) shows a compositional bias: pro residues. Composition is skewed to low complexity over residues 637 to 647 (SPTSAAPPAGL) and 699 to 715 (GVGH…AGAR). Residues 755–765 (HPGVGVAGFVQ) show a composition bias toward gly residues.

The protein belongs to the SKN7 family. In terms of assembly, homotrimer.

Its subcellular location is the nucleus. In terms of biological role, transcription factor that is part of a SLN1-YPD1-SKN7 two-component regulatory system, which controls gene expression in response to changes in the osmolarity of the extracellular environment. Under low osmotic conditions, phosphorylated and activated by the phosphorelay intermediate protein YPD1. Also activated in response to oxidative stress, independent on the two-component regulatory system. Regulates heat shock genes in response to oxidative stress and genes involved in cell wall integrity in response to osmotic changes. This is Transcription factor SKN7 from Chaetomium thermophilum (strain DSM 1495 / CBS 144.50 / IMI 039719) (Thermochaetoides thermophila).